Reading from the N-terminus, the 424-residue chain is Inhibin beta A chain (424 aa).

An N-terminal signal peptide occupies residues 1–20; the sequence is MPLLWKRGFLLVICWIIVRS. Residues 21-308 constitute a propeptide that is removed on maturation; sequence SPTPGSEGHS…EDRQHRRRER (288 aa). N-linked (GlcNAc...) asparagine glycosylation occurs at asparagine 165. 2 disordered regions span residues 178–200 and 260–288; these read QQRQ…LKGE and KKKK…QSHR. The segment covering 263–275 has biased composition (basic and acidic residues); sequence KEDDGEGKEKDGG. 4 cysteine pairs are disulfide-bonded: cysteine 312-cysteine 320, cysteine 319-cysteine 389, cysteine 348-cysteine 421, and cysteine 352-cysteine 423.

The protein belongs to the TGF-beta family. Dimeric, linked by one or more disulfide bonds. Inhibin A is a dimer of alpha and beta-A. Inhibin B is a dimer of alpha and beta-B. Activin A is a homodimer of beta-A. Activin B is a homodimer of beta-B. Activin AB is a dimer of beta-A and beta-B. As to expression, ciliary ganglion neurons. Levels are higher in the choroid than the iris.

The protein localises to the secreted. Its function is as follows. Inhibins and activins inhibit and activate, respectively, the secretion of follitropin by the pituitary gland. Inhibins/activins are involved in regulating a number of diverse functions such as hypothalamic and pituitary hormone secretion, gonadal hormone secretion, germ cell development and maturation, erythroid differentiation, insulin secretion, nerve cell survival, embryonic axial development or bone growth, depending on their subunit composition. Inhibins appear to oppose the functions of activins. Induces somatostatin in the ciliary ganglion neurons and may play a role in regulating neurotransmitter phenotype. The sequence is that of Inhibin beta A chain (INHBA) from Gallus gallus (Chicken).